Here is a 446-residue protein sequence, read N- to C-terminus: ATP-dependent protease ATPase subunit HslU (446 aa).

ATP-binding positions include Ile-18, Gly-60–Glu-65, Asp-259, Glu-324, and Arg-396.

Belongs to the ClpX chaperone family. HslU subfamily. As to quaternary structure, a double ring-shaped homohexamer of HslV is capped on each side by a ring-shaped HslU homohexamer. The assembly of the HslU/HslV complex is dependent on binding of ATP.

Its subcellular location is the cytoplasm. ATPase subunit of a proteasome-like degradation complex; this subunit has chaperone activity. The binding of ATP and its subsequent hydrolysis by HslU are essential for unfolding of protein substrates subsequently hydrolyzed by HslV. HslU recognizes the N-terminal part of its protein substrates and unfolds these before they are guided to HslV for hydrolysis. The protein is ATP-dependent protease ATPase subunit HslU of Vibrio atlanticus (strain LGP32) (Vibrio splendidus (strain Mel32)).